The sequence spans 277 residues: Collectin-10 (277 aa).

Residues 1-27 form the signal peptide; sequence MSRKKEQQLRKYGTLVVLFIFQVQIFG. Positions 41–82 are disordered; it reads THTILPGPKGDDGEKGDRGEVGKQGKVGPKGPKGNKGTVGDV. The span at 49–63 shows a compositional bias: basic and acidic residues; that stretch reads KGDDGEKGDRGEVGK. A Collagen-like domain is found at 56-115; it reads GDRGEVGKQGKVGPKGPKGNKGTVGDVGDQGMLGKIGPIGGKGDKGAKGISGVSGKKGKA. Low complexity predominate over residues 64-79; the sequence is QGKVGPKGPKGNKGTV. The C-type lectin domain maps to 155–271; it reads TDEKFYYIVK…CQVTIYFICE (117 aa). 2 cysteine pairs are disulfide-bonded: Cys176–Cys270 and Cys248–Cys262. N-linked (GlcNAc...) asparagine glycosylation occurs at Asn258.

It belongs to the COLEC10/COLEC11 family. Widely expressed. Highly expressed in lung. Weakly expressed in larynx, syrinx and cranial air sac. Expressed throughout the lower gastrointestinal tract in increasing levels starting from a faint signal in duodenum and ending with relatively high signals in proctodeum, coprodeum and urodeum. In the upper part of the gastrointestinal tract, expressed in tongue, crop, and mucosa of the crop.

The protein resides in the secreted. Its subcellular location is the golgi apparatus. The protein localises to the cytoplasm. Lectin that binds to various sugars: galactose &gt; mannose = fucose &gt; N-acetylglucosamine &gt; N-acetylgalactosamine. Acts as a chemoattractant, probably involved in the regulation of cell migration. The polypeptide is Collectin-10 (COLEC10) (Gallus gallus (Chicken)).